The primary structure comprises 145 residues: D-aminoacyl-tRNA deacylase (145 aa).

The short motif at 137-138 is the Gly-cisPro motif, important for rejection of L-amino acids element; that stretch reads GP.

This sequence belongs to the DTD family. Homodimer.

The protein resides in the cytoplasm. The catalysed reaction is glycyl-tRNA(Ala) + H2O = tRNA(Ala) + glycine + H(+). The enzyme catalyses a D-aminoacyl-tRNA + H2O = a tRNA + a D-alpha-amino acid + H(+). In terms of biological role, an aminoacyl-tRNA editing enzyme that deacylates mischarged D-aminoacyl-tRNAs. Also deacylates mischarged glycyl-tRNA(Ala), protecting cells against glycine mischarging by AlaRS. Acts via tRNA-based rather than protein-based catalysis; rejects L-amino acids rather than detecting D-amino acids in the active site. By recycling D-aminoacyl-tRNA to D-amino acids and free tRNA molecules, this enzyme counteracts the toxicity associated with the formation of D-aminoacyl-tRNA entities in vivo and helps enforce protein L-homochirality. The protein is D-aminoacyl-tRNA deacylase of Pectobacterium carotovorum subsp. carotovorum (strain PC1).